The primary structure comprises 95 residues: Protein TusB (95 aa).

This sequence belongs to the DsrH/TusB family. As to quaternary structure, heterohexamer, formed by a dimer of trimers. The hexameric TusBCD complex contains 2 copies each of TusB, TusC and TusD. The TusBCD complex interacts with TusE.

It localises to the cytoplasm. In terms of biological role, part of a sulfur-relay system required for 2-thiolation of 5-methylaminomethyl-2-thiouridine (mnm(5)s(2)U) at tRNA wobble positions. In Klebsiella pneumoniae (strain 342), this protein is Protein TusB.